The sequence spans 158 residues: Cathelicidin-6 (158 aa).

Residues 1 to 29 (METQRASLSLGRWSLWLLLLGLALPSASA) form the signal peptide. Residues 30–131 (QALSYREAVL…NVTCEELQSV (102 aa)) constitute a propeptide that is removed on maturation. Intrachain disulfides connect Cys86/Cys97 and Cys108/Cys125.

It belongs to the cathelicidin family.

The protein resides in the secreted. Functionally, exerts a potent antimicrobial activity against Gram-negative and Gram-positive bacteria, including methicillin-resistant Staphylococcus aureus, and fungi. This chain is Cathelicidin-6 (CATHL6), found in Bos taurus (Bovine).